The primary structure comprises 45 residues: Iota-conotoxin-like R11.10 (45 aa).

Intrachain disulfides connect C5-C19, C12-C22, C18-C27, and C21-C36. L43 is modified (D-leucine). A propeptide (removed by a carboxypeptidase) is located at residue R45.

This sequence belongs to the conotoxin I1 superfamily. In terms of tissue distribution, expressed by the venom duct.

The protein resides in the secreted. Its function is as follows. Iota-conotoxins bind to voltage-gated sodium channels (Nav) and act as agonists by shifting the voltage-dependence of activation to more hyperpolarized levels. Produces general excitatory symptoms. The sequence is that of Iota-conotoxin-like R11.10 from Conus radiatus (Rayed cone).